We begin with the raw amino-acid sequence, 382 residues long: Saccharopine dehydrogenase [NAD(+), L-lysine-forming] (382 aa).

Residues Arg20 and Lys79 each contribute to the L-saccharopine site. The Proton acceptor role is filled by Lys79. His98 acts as the Proton donor in catalysis. Residue Gln103 participates in L-saccharopine binding. Arg132 contributes to the NAD(+) binding site. The L-saccharopine site is built by Arg133 and Phe137. NAD(+) is bound by residues 215 to 216 (GR), Asp239, Thr243, Tyr263, and Val290. Cys217 and Cys261 form a disulfide bridge. Position 291–293 (291–293 (SAD)) interacts with L-saccharopine. 330-333 (IDHL) provides a ligand contact to NAD(+).

Belongs to the AlaDH/PNT family. In terms of assembly, monomer.

It catalyses the reaction L-saccharopine + NAD(+) + H2O = L-lysine + 2-oxoglutarate + NADH + H(+). The protein operates within amino-acid biosynthesis; L-lysine biosynthesis via AAA pathway; L-lysine from L-alpha-aminoadipate (fungal route): step 3/3. Catalyzes the NAD(+)-dependent cleavage of saccharopine to L-lysine and 2-oxoglutarate, the final step in the alpha-aminoadipate (AAA) pathway for lysin biosynthesis. This chain is Saccharopine dehydrogenase [NAD(+), L-lysine-forming], found in Candida albicans (strain SC5314 / ATCC MYA-2876) (Yeast).